The sequence spans 179 residues: Translation initiation factor IF-3 (179 aa).

Belongs to the IF-3 family. As to quaternary structure, monomer.

Its subcellular location is the cytoplasm. IF-3 binds to the 30S ribosomal subunit and shifts the equilibrium between 70S ribosomes and their 50S and 30S subunits in favor of the free subunits, thus enhancing the availability of 30S subunits on which protein synthesis initiation begins. The polypeptide is Translation initiation factor IF-3 (Zymomonas mobilis subsp. mobilis (strain ATCC 31821 / ZM4 / CP4)).